The primary structure comprises 1243 residues: Plasma membrane calcium-transporting ATPase 2 (1243 aa).

The segment covering 1-13 has biased composition (polar residues); the sequence is MGDMTNSDFYSKN. Residues 1–24 are disordered; the sequence is MGDMTNSDFYSKNQRNESSHGGEF. The Cytoplasmic segment spans residues 1-94; the sequence is MGDMTNSDFY…NFIPPKKPKT (94 aa). Ser18 carries the post-translational modification Phosphoserine. A helical transmembrane segment spans residues 95–115; it reads FLQLVWEALQDVTLIILEIAA. Residues 116 to 152 lie on the Extracellular side of the membrane; it reads IISLGLSFYHPPGEGNEGCATAQGGAEDEGEAEAGWI. A helical membrane pass occupies residues 153–173; it reads EGAAILLSVICVVLVTAFNDW. Residues 174–390 lie on the Cytoplasmic side of the membrane; the sequence is SKEKQFRGLQ…KEKSVLQGKL (217 aa). A disordered region spans residues 334 to 381; that stretch reads GKMQDGNVDASQSKAKQQDGAAAMEMQPLKSAEGGDADDRKKASMHKK. Residues 391–410 form a helical membrane-spanning segment; sequence TKLAVQIGKAGLVMSAITVI. Residues 411-443 are Extracellular-facing; that stretch reads ILVLYFTVDTFVVNKKPWLPECTPVYVQYFVKF. Residues 444–461 form a helical membrane-spanning segment; the sequence is FIIGVTVLVVAVPEGLPL. Over 462-875 the chain is Cytoplasmic; it reads AVTISLAYSV…MWGRNVYDSI (414 aa). Residue Asp499 is the 4-aspartylphosphate intermediate of the active site. Mg(2+)-binding residues include Asp820 and Asp824. A helical membrane pass occupies residues 876-895; it reads SKFLQFQLTVNVVAVIVAFT. The Extracellular segment spans residues 896-905; it reads GACITQDSPL. The helical transmembrane segment at 906-926 threads the bilayer; that stretch reads KAVQMLWVNLIMDTFASLALA. The Cytoplasmic segment spans residues 927-946; it reads TEPPTETLLLRKPYGRNKPL. A helical transmembrane segment spans residues 947 to 969; sequence ISRTMMKNILGHAVYQLALIFTL. The Extracellular portion of the chain corresponds to 970–987; the sequence is LFVGEKMFQIDSGRNAPL. Residues 988–1009 form a helical membrane-spanning segment; it reads HSPPSEHYTIIFNTFVMMQLFN. Topologically, residues 1010–1028 are cytoplasmic; the sequence is EINARKIHGERNVFDGIFR. Residues 1029–1050 form a helical membrane-spanning segment; that stretch reads NPIFCTIVLGTFAIQIVIVQFG. Topologically, residues 1051–1060 are extracellular; sequence GKPFSCSPLQ. The helical transmembrane segment at 1061 to 1082 threads the bilayer; sequence LDQWMWCIFIGLGELVWGQVIA. The Cytoplasmic segment spans residues 1083–1243; sequence TIPTSRLKFL…SPIHSLETSL (161 aa). A phosphoserine mark is found at Glu1120, Arg1132, and Leu1134. The interval 1123 to 1140 is calmodulin-binding subdomain A; sequence LRRGQILWFRGLNRIQTQ. Thr1139 is modified (phosphothreonine; by PKC). Positions 1141–1150 are calmodulin-binding subdomain B; the sequence is IRVVKAFRSS. 6 positions are modified to phosphoserine: Ala1146, Leu1151, Ser1163, His1165, Asp1177, and Ser1178. The residue at position 1188 (Thr1188) is a Phosphothreonine. The disordered stretch occupies residues 1194-1243; it reads AALKQNSSPPSSLNKNNSAIDSGINLTTDTSKSATSSSPGSPIHSLETSL. 2 stretches are compositionally biased toward low complexity: residues 1196–1211 and 1220–1234; these read LKQN…KNNS and TTDT…SPGS. Ser1201 is modified (phosphoserine; by PKA). A Phosphoserine modification is found at Ser1211.

It belongs to the cation transport ATPase (P-type) (TC 3.A.3) family. Type IIB subfamily. Interacts with PDZD11. In terms of tissue distribution, mainly expressed in brain cortex. Found in low levels in skeletal muscle, heart muscle, stomach, liver, kidney and lung. Isoforms containing segment B are found in brain cortex and at low levels in other tissues. Isoforms containing segments X and W are found at low levels in all tissues. Isoforms containing segment A and segment Z are found at low levels in skeletal muscle and heart muscle.

It localises to the cell membrane. The protein resides in the synapse. The protein localises to the apical cell membrane. It is found in the basolateral cell membrane. It carries out the reaction Ca(2+)(in) + ATP + H2O = Ca(2+)(out) + ADP + phosphate + H(+). Up-regulated by calmodulin which increases the affinity of the pump for Ca(2+) ions. Its function is as follows. ATP-driven Ca(2+) ion pump involved in the maintenance of basal intracellular Ca(2+) levels in specialized cells of cerebellar circuit and vestibular and cochlear systems. Uses ATP as an energy source to transport cytosolic Ca(2+) ions across the plasma membrane to the extracellular compartment. Has fast activation and Ca(2+) clearance rate suited to control fast neuronal Ca(2+) dynamics. At parallel fiber to Purkinje neuron synapse, mediates presynaptic Ca(2+) efflux in response to climbing fiber-induced Ca(2+) rise. Provides for fast return of Ca(2+) concentrations back to their resting levels, ultimately contributing to long-term depression induction and motor learning. Plays an essential role in hearing and balance. In cochlear hair cells, shuttles Ca(2+) ions from stereocilia to the endolymph and dissipates Ca(2+) transients generated by the opening of the mechanoelectrical transduction channels. Regulates Ca(2+) levels in the vestibular system, where it contributes to the formation of otoconia. In non-excitable cells, regulates Ca(2+) signaling through spatial control of Ca(2+) ions extrusion and dissipation of Ca(2+) transients generated by store-operated channels. In lactating mammary gland, allows for the high content of Ca(2+) ions in the milk. The protein is Plasma membrane calcium-transporting ATPase 2 of Homo sapiens (Human).